The sequence spans 94 residues: Small ribosomal subunit protein uS19 (94 aa).

Belongs to the universal ribosomal protein uS19 family.

Protein S19 forms a complex with S13 that binds strongly to the 16S ribosomal RNA. The polypeptide is Small ribosomal subunit protein uS19 (Finegoldia magna (strain ATCC 29328 / DSM 20472 / WAL 2508) (Peptostreptococcus magnus)).